The following is a 441-amino-acid chain: Xylose isomerase (441 aa).

Residues H105 and D108 contribute to the active site. Mg(2+) contacts are provided by E236, E272, H275, D300, D311, D313, and D343.

The protein belongs to the xylose isomerase family. As to quaternary structure, homotetramer. Mg(2+) is required as a cofactor.

It localises to the cytoplasm. The catalysed reaction is alpha-D-xylose = alpha-D-xylulofuranose. This Mesorhizobium japonicum (strain LMG 29417 / CECT 9101 / MAFF 303099) (Mesorhizobium loti (strain MAFF 303099)) protein is Xylose isomerase.